Reading from the N-terminus, the 117-residue chain is Nascent polypeptide-associated complex protein (117 aa).

One can recognise an NAC-A/B domain in the interval 3 to 72 (PVNPRDLEKM…YTVEKPREET (70 aa)).

It belongs to the NAC-alpha family. In terms of assembly, homodimer. Interacts with the ribosome. Binds ribosomal RNA.

Functionally, contacts the emerging nascent chain on the ribosome. In Aeropyrum pernix (strain ATCC 700893 / DSM 11879 / JCM 9820 / NBRC 100138 / K1), this protein is Nascent polypeptide-associated complex protein.